The primary structure comprises 1373 residues: Insulin-like growth factor 1 receptor (1373 aa).

The signal sequence occupies residues 1–30; sequence MKSGSGGGSPTSLWGLVFLSAALSLWPTSG. A disulfide bridge connects residues C33 and C52. N-linked (GlcNAc...) asparagine glycans are attached at residues N51, N102, and N135. Cystine bridges form between C150–C178, C182–C205, C192–C211, C215–C224, C219–C230, C231–C239, C235–C248, C251–C260, C264–C276, C282–C303, C307–C321, C324–C328, and C332–C354. A glycan (N-linked (GlcNAc...) asparagine) is linked at N245. N314 carries an N-linked (GlcNAc...) asparagine glycan. N418 and N439 each carry an N-linked (GlcNAc...) asparagine glycan. A disulfide bridge links C456 with C489. 4 Fibronectin type-III domains span residues 490-610, 611-709, 735-829, and 835-928; these read ESDV…TNAS, VPSI…TEAE, RPER…TMPA, and IPGP…VPAK. 9 N-linked (GlcNAc...) asparagine glycosylation sites follow: N535, N608, N623, N641, N748, N757, N765, N901, and N914. Residues 742–936 lie on the Extracellular side of the membrane; that stretch reads DVMQVANTTM…AKTTYENFMH (195 aa). A helical membrane pass occupies residues 937–960; sequence LIIALPVAILLIVGGLVIMLYVFH. The Cytoplasmic segment spans residues 961 to 1373; sequence RKRNNSRLGN…ALPLPQSSTC (413 aa). Positions 978–981 match the IRS1- and SHC1-binding motif; the sequence is NPEY. Residue Y981 is modified to Phosphotyrosine. The region spanning 1000-1276 is the Protein kinase domain; the sequence is ITMNRELGQG…SIKDEMEPSF (277 aa). ATP-binding positions include 1006 to 1014 and K1034; that span reads LGQGSFGMV. D1137 (proton acceptor) is an active-site residue. Phosphotyrosine; by autocatalysis occurs at positions 1163, 1167, and 1168. Residues K1170 and K1173 each participate in a glycyl lysine isopeptide (Lys-Gly) (interchain with G-Cter in ubiquitin) cross-link. Residue S1280 is modified to Phosphoserine; by GSK3-beta. Positions 1283-1373 are disordered; the sequence is YSEENKPPEP…ALPLPQSSTC (91 aa). S1284 is subject to Phosphoserine. Over residues 1292–1305 the composition is skewed to acidic residues; it reads PEELEMELEMEPEN. Positions 1306 to 1322 are enriched in low complexity; the sequence is MESVPLDPSASSASLPL. Positions 1323 to 1332 are enriched in basic and acidic residues; it reads PERHSGHKAE.

It belongs to the protein kinase superfamily. Tyr protein kinase family. Insulin receptor subfamily. As to quaternary structure, tetramer of 2 alpha and 2 beta chains linked by disulfide bonds. The alpha chains contribute to the formation of the ligand-binding domain, while the beta chain carries the kinase domain. Interacts with PIK3R1 and with the PTB/PID domains of IRS1 and SHC1 in vitro when autophosphorylated on tyrosine residues. Forms a hybrid receptor with INSR, the hybrid is a tetramer consisting of 1 alpha chain and 1 beta chain of INSR and 1 alpha chain and 1 beta chain of IGF1R. Interacts with ARRB1 and ARRB2. Interacts with GRB10. Interacts with RACK1. Interacts with SOCS1, SOCS2 and SOCS3. Interacts with 14-3-3 proteins. Interacts with NMD2. Interacts with MAP3K5. Interacts with STAT3. Found in a ternary complex with IGF1 and ITGAV:ITGB3 or ITGA6:ITGB4. Interacts (nascent precursor form) with ZFAND2B. In terms of processing, autophosphorylated on tyrosine residues in response to ligand binding. Autophosphorylation occurs in trans, i.e. one subunit of the dimeric receptor phosphorylates tyrosine residues on the other subunit. Autophosphorylation occurs in a sequential manner; Tyr-1167 is predominantly phosphorylated first, followed by phosphorylation of Tyr-1163 and Tyr-1168. While every single phosphorylation increases kinase activity, all three tyrosine residues in the kinase activation loop (Tyr-1163, Tyr-1167 and Tyr-1168) have to be phosphorylated for optimal activity. Can be autophosphorylated at additional tyrosine residues (in vitro). Autophosphorylated is followed by phosphorylation of juxtamembrane tyrosines and C-terminal serines. May also be phosphorylated at Tyr-1163 and Tyr-1168 by mTORC2. Phosphorylation of Tyr-981 is required for IRS1- and SHC1-binding. Phosphorylation of Ser-1280 by GSK-3beta restrains kinase activity and promotes cell surface expression, it requires a priming phosphorylation at Ser-1284. Dephosphorylated by PTPN1. Polyubiquitinated at Lys-1170 and Lys-1173 through both 'Lys-48' and 'Lys-29' linkages, promoting receptor endocytosis and subsequent degradation by the proteasome. Ubiquitination is facilitated by pre-existing phosphorylation. Post-translationally, sumoylated with SUMO1. In terms of processing, controlled by regulated intramembrane proteolysis (RIP). Undergoes metalloprotease-dependent constitutive ectodomain shedding to produce a membrane-anchored 52 kDa C-Terminal fragment which is further processed by presenilin gamma-secretase to yield an intracellular 50 kDa fragment.

The protein resides in the cell membrane. The enzyme catalyses L-tyrosyl-[protein] + ATP = O-phospho-L-tyrosyl-[protein] + ADP + H(+). Activated by autophosphorylation at Tyr-1163, Tyr-1167 and Tyr-1168 on the kinase activation loop; phosphorylation at all three tyrosine residues is required for optimal kinase activity. Inhibited by MSC1609119A-1, BMS-754807, PQIP, benzimidazole pyridinone, isoquinolinedione, bis-azaindole, 3-cyanoquinoline, 2,4-bis-arylamino-1,3-pyrimidine, pyrrolopyrimidine, pyrrole-5-carboxaldehyde, picropodophyllin (PPP), tyrphostin derivatives. While most inhibitors bind to the ATP binding pocket, MSC1609119A-1 functions as allosteric inhibitor and binds close to the DFG motif and the activation loop. Receptor tyrosine kinase which mediates actions of insulin-like growth factor 1 (IGF1). Binds IGF1 with high affinity and IGF2 and insulin (INS) with a lower affinity. The activated IGF1R is involved in cell growth and survival control. IGF1R is crucial for tumor transformation and survival of malignant cell. Ligand binding activates the receptor kinase, leading to receptor autophosphorylation, and tyrosines phosphorylation of multiple substrates, that function as signaling adapter proteins including, the insulin-receptor substrates (IRS1/2), Shc and 14-3-3 proteins. Phosphorylation of IRSs proteins lead to the activation of two main signaling pathways: the PI3K-AKT/PKB pathway and the Ras-MAPK pathway. The result of activating the MAPK pathway is increased cellular proliferation, whereas activating the PI3K pathway inhibits apoptosis and stimulates protein synthesis. Phosphorylated IRS1 can activate the 85 kDa regulatory subunit of PI3K (PIK3R1), leading to activation of several downstream substrates, including protein AKT/PKB. AKT phosphorylation, in turn, enhances protein synthesis through mTOR activation and triggers the antiapoptotic effects of IGFIR through phosphorylation and inactivation of BAD. In parallel to PI3K-driven signaling, recruitment of Grb2/SOS by phosphorylated IRS1 or Shc leads to recruitment of Ras and activation of the ras-MAPK pathway. In addition to these two main signaling pathways IGF1R signals also through the Janus kinase/signal transducer and activator of transcription pathway (JAK/STAT). Phosphorylation of JAK proteins can lead to phosphorylation/activation of signal transducers and activators of transcription (STAT) proteins. In particular activation of STAT3, may be essential for the transforming activity of IGF1R. The JAK/STAT pathway activates gene transcription and may be responsible for the transforming activity. JNK kinases can also be activated by the IGF1R. IGF1 exerts inhibiting activities on JNK activation via phosphorylation and inhibition of MAP3K5/ASK1, which is able to directly associate with the IGF1R. When present in a hybrid receptor with INSR, binds IGF1. This is Insulin-like growth factor 1 receptor (Igf1r) from Mus musculus (Mouse).